We begin with the raw amino-acid sequence, 463 residues long: Ribosomal protein uS12 methylthiotransferase RimO (463 aa).

Residues 15–130 enclose the MTTase N-terminal domain; sequence PKVGFVSLGC…VMQAVHSHLP (116 aa). Residues C24, C60, C89, C161, C165, and C168 each contribute to the [4Fe-4S] cluster site. Residues 147–392 enclose the Radical SAM core domain; sequence LTPRHYAYLK…MEVAEQVSAK (246 aa). Residues 395–463 form the TRAM domain; sequence ARKVGKTLKV…ADGHDLWGEV (69 aa).

This sequence belongs to the methylthiotransferase family. RimO subfamily. [4Fe-4S] cluster serves as cofactor.

Its subcellular location is the cytoplasm. The catalysed reaction is L-aspartate(89)-[ribosomal protein uS12]-hydrogen + (sulfur carrier)-SH + AH2 + 2 S-adenosyl-L-methionine = 3-methylsulfanyl-L-aspartate(89)-[ribosomal protein uS12]-hydrogen + (sulfur carrier)-H + 5'-deoxyadenosine + L-methionine + A + S-adenosyl-L-homocysteine + 2 H(+). Catalyzes the methylthiolation of an aspartic acid residue of ribosomal protein uS12. In Paraburkholderia phymatum (strain DSM 17167 / CIP 108236 / LMG 21445 / STM815) (Burkholderia phymatum), this protein is Ribosomal protein uS12 methylthiotransferase RimO.